A 224-amino-acid chain; its full sequence is Uracil-DNA glycosylase 2 (224 aa).

Residue aspartate 64 is the Proton acceptor of the active site.

Belongs to the uracil-DNA glycosylase (UDG) superfamily. UNG family.

The protein localises to the cytoplasm. The catalysed reaction is Hydrolyzes single-stranded DNA or mismatched double-stranded DNA and polynucleotides, releasing free uracil.. Excises uracil residues from the DNA which can arise as a result of misincorporation of dUMP residues by DNA polymerase or due to deamination of cytosine. The polypeptide is Uracil-DNA glycosylase 2 (Listeria monocytogenes serotype 4b (strain F2365)).